The sequence spans 930 residues: Translation initiation factor IF-2 (930 aa).

The segment covering 50–67 (FKPAAAPKVEAKPAAPKV) has biased composition (low complexity). Disordered regions lie at residues 50-217 (FKPA…SSEE) and 260-346 (EVVP…HELP). Composition is skewed to basic and acidic residues over residues 68 to 90 (SAEK…EAKP) and 110 to 125 (FKAE…AERR). The segment covering 129–141 (KGNNRDQQQNGNR) has biased composition (low complexity). Basic and acidic residues-rich tracts occupy residues 157-167 (RDNRRFNDQAK) and 262-295 (VPEK…DGPR). Low complexity predominate over residues 309 to 318 (NQKNSNWNNN). The span at 337 to 346 (VTERKFHELP) shows a compositional bias: basic and acidic residues. Residues 432–599 (ERPPVVTIMG…TVLLVAEIQE (168 aa)) form the tr-type G domain. Residues 441–448 (GHVDHGKT) form a G1 region. 441–448 (GHVDHGKT) contributes to the GTP binding site. A G2 region spans residues 466 to 470 (GITQH). The tract at residues 487-490 (DTPG) is G3. GTP-binding positions include 487 to 491 (DTPGH) and 541 to 544 (NKID). Residues 541–544 (NKID) form a G4 region. The G5 stretch occupies residues 577–579 (SAK).

This sequence belongs to the TRAFAC class translation factor GTPase superfamily. Classic translation factor GTPase family. IF-2 subfamily.

The protein localises to the cytoplasm. Functionally, one of the essential components for the initiation of protein synthesis. Protects formylmethionyl-tRNA from spontaneous hydrolysis and promotes its binding to the 30S ribosomal subunits. Also involved in the hydrolysis of GTP during the formation of the 70S ribosomal complex. This is Translation initiation factor IF-2 from Streptococcus pneumoniae (strain P1031).